Consider the following 201-residue polypeptide: Pyridoxine/pyridoxamine 5'-phosphate oxidase (201 aa).

Residues 45–50 (RMVLLK), 65–66 (YT), Arg71, Lys72, and Gln94 each bind FMN. A substrate-binding site is contributed by Lys50. Substrate contacts are provided by Tyr112, Arg116, and Ser120. Residues 129–130 (QS) and Trp174 each bind FMN. Position 180-182 (180-182 (RLH)) interacts with substrate. Residue Arg184 coordinates FMN.

The protein belongs to the pyridoxamine 5'-phosphate oxidase family. Homodimer. FMN serves as cofactor.

The catalysed reaction is pyridoxamine 5'-phosphate + O2 + H2O = pyridoxal 5'-phosphate + H2O2 + NH4(+). It carries out the reaction pyridoxine 5'-phosphate + O2 = pyridoxal 5'-phosphate + H2O2. It participates in cofactor metabolism; pyridoxal 5'-phosphate salvage; pyridoxal 5'-phosphate from pyridoxamine 5'-phosphate: step 1/1. It functions in the pathway cofactor metabolism; pyridoxal 5'-phosphate salvage; pyridoxal 5'-phosphate from pyridoxine 5'-phosphate: step 1/1. Its function is as follows. Catalyzes the oxidation of either pyridoxine 5'-phosphate (PNP) or pyridoxamine 5'-phosphate (PMP) into pyridoxal 5'-phosphate (PLP). The sequence is that of Pyridoxine/pyridoxamine 5'-phosphate oxidase from Rhodospirillum rubrum (strain ATCC 11170 / ATH 1.1.1 / DSM 467 / LMG 4362 / NCIMB 8255 / S1).